The primary structure comprises 1795 residues: Protein TIC 214 (1795 aa).

The next 6 helical transmembrane spans lie at 19 to 39 (IINS…FSIG), 68 to 88 (FIAG…HLAL), 91 to 111 (PHTI…WNNH), 133 to 153 (VFLN…SSML), 176 to 196 (VGWL…LVWI), and 227 to 247 (IFSI…PSPI). Residues 1490 to 1517 (EKESTGQVEFESDKEQQRNSESALSNQE) are disordered. The span at 1508-1517 (NSESALSNQE) shows a compositional bias: polar residues.

The protein belongs to the TIC214 family. As to quaternary structure, part of the Tic complex.

The protein resides in the plastid. Its subcellular location is the chloroplast inner membrane. Functionally, involved in protein precursor import into chloroplasts. May be part of an intermediate translocation complex acting as a protein-conducting channel at the inner envelope. The sequence is that of Protein TIC 214 from Crucihimalaya wallichii (Rock-cress).